The following is an 82-amino-acid chain: Cytochrome c-551 (82 aa).

Heme c contacts are provided by cysteine 12, cysteine 15, histidine 16, and methionine 61.

Binds 1 heme c group covalently per subunit.

In Azotobacter vinelandii, this protein is Cytochrome c-551.